A 421-amino-acid polypeptide reads, in one-letter code: Zinc metalloproteinase-disintegrin-like lachestatin-2 (421 aa).

A Peptidase M12B domain is found at 10-206 (KYVKLVLVAD…DMPQCILEKP (197 aa)). Disulfide bonds link C121–C201, C161–C185, and C163–C168. H146 provides a ligand contact to Zn(2+). E147 is a catalytic residue. 2 residues coordinate Zn(2+): H150 and H156. The 86-residue stretch at 214-299 (PPVCGNYFVE…AECTDRFQRN (86 aa)) folds into the Disintegrin domain. The Ca(2+) site is built by V216, N219, F221, E223, E226, and D229. 14 cysteine pairs are disulfide-bonded: C217–C246, C228–C241, C230–C236, C240–C263, C254–C260, C259–C285, C272–C292, C279–C310, C303–C315, C322–C372, C337–C383, C350–C360, C367–C409, and C403–C414. Residues 278 to 280 (ECD) carry the D/ECD-tripeptide motif. Residues D280, M281, D283, D294, and R295 each contribute to the Ca(2+) site. The N-linked (GlcNAc...) asparagine glycan is linked to N312.

This sequence belongs to the venom metalloproteinase (M12B) family. P-III subfamily. P-IIIc sub-subfamily. In terms of assembly, homodimer; disulfide-linked. The cofactor is Zn(2+). Expressed by the venom gland.

It localises to the secreted. Snake venom zinc metalloprotease that induces apoptosis in vascular endothelial cells (VEC), without degrading the extracellular matrix (it cannot cleave collagen) or inhibiting adhesion of VEC. Has also fibrinogenolytic and hemorrhagic activities. This chain is Zinc metalloproteinase-disintegrin-like lachestatin-2, found in Lachesis muta rhombeata (Bushmaster).